The chain runs to 344 residues: Serine/arginine-rich splicing factor 6 (344 aa).

The RRM 1 domain occupies 1–72; sequence MPRVYIGRLS…ERVIVEHARG (72 aa). Phosphoserine occurs at positions 45, 81, and 84. Residues 75 to 103 are disordered; it reads RDRDGYSYGSRSGGGGYSSRRTSGRDKYG. Residues 110-183 enclose the RRM 2 domain; the sequence is YRLIVENLSS…RNIRLIEDKP (74 aa). The residue at position 165 (Lys165) is an N6-acetyllysine. The disordered stretch occupies residues 176–344; sequence IRLIEDKPRT…RSRSRSSSRD (169 aa). Lys182 participates in a covalent cross-link: Glycyl lysine isopeptide (Lys-Gly) (interchain with G-Cter in SUMO2). A compositionally biased stretch (basic residues) spans 185–250; sequence TSHRRSYSGS…RKSRSKSKSK (66 aa). Basic and acidic residues-rich tracts occupy residues 264-273 and 280-291; these read RSKDEYEKSR and SPKENGKGDIKS. 2 positions are modified to phosphoserine: Ser297 and Ser299. Ser303 is subject to Phosphoserine; by DYRK1A. Phosphoserine is present on residues Ser314 and Ser316. Basic residues predominate over residues 322 to 344; that stretch reads ATSRSRSRSRSKSRSRSRSSSRD.

The protein belongs to the splicing factor SR family. Binds SREK1/SFRS12. Interacts with DYRK1A. Extensively phosphorylated on serine residues in the RS domain. Phosphorylated by DYRK1A, probably in the RS domain. Phosphorylation by DYRK1A modulates alternative splice site selection and inhibits the expression of MAPT/Tau exon 10.

The protein resides in the nucleus. It localises to the nucleus speckle. Functionally, plays a role in constitutive splicing and modulates the selection of alternative splice sites. Plays a role in the alternative splicing of MAPT/Tau exon 10. Binds to alternative exons of TNC pre-mRNA and promotes the expression of alternatively spliced TNC. Plays a role in wound healing and in the regulation of keratinocyte differentiation and proliferation via its role in alternative splicing. The chain is Serine/arginine-rich splicing factor 6 (SRSF6) from Homo sapiens (Human).